A 364-amino-acid polypeptide reads, in one-letter code: Mannose-1-phosphate guanyltransferase (364 aa).

It belongs to the transferase hexapeptide repeat family.

It localises to the cytoplasm. It catalyses the reaction alpha-D-mannose 1-phosphate + GTP + H(+) = GDP-alpha-D-mannose + diphosphate. Its pathway is nucleotide-sugar biosynthesis; GDP-alpha-D-mannose biosynthesis; GDP-alpha-D-mannose from alpha-D-mannose 1-phosphate (GTP route): step 1/1. Involved in cell wall synthesis where it is required for glycosylation. Involved in cell cycle progression through cell-size checkpoint. This chain is Mannose-1-phosphate guanyltransferase (mpg-1), found in Neurospora crassa (strain ATCC 24698 / 74-OR23-1A / CBS 708.71 / DSM 1257 / FGSC 987).